The primary structure comprises 298 residues: N-acetylmuramic acid 6-phosphate etherase (298 aa).

Residues 55–218 (AANRYKKGGR…STGVMIRQGK (164 aa)) enclose the SIS domain. Glutamate 83 acts as the Proton donor in catalysis. Glutamate 114 is a catalytic residue.

It belongs to the GCKR-like family. MurNAc-6-P etherase subfamily. Homodimer.

The enzyme catalyses N-acetyl-D-muramate 6-phosphate + H2O = N-acetyl-D-glucosamine 6-phosphate + (R)-lactate. It functions in the pathway amino-sugar metabolism; N-acetylmuramate degradation. In terms of biological role, specifically catalyzes the cleavage of the D-lactyl ether substituent of MurNAc 6-phosphate, producing GlcNAc 6-phosphate and D-lactate. The polypeptide is N-acetylmuramic acid 6-phosphate etherase (Lactobacillus acidophilus (strain ATCC 700396 / NCK56 / N2 / NCFM)).